The following is a 748-amino-acid chain: Cysteine--tRNA ligase, cytoplasmic (748 aa).

The interval 1–25 is disordered; that stretch reads MADSSGQQGKGRRVQPQWSPPAGTQ. Ala-2 bears the N-acetylalanine mark. Ser-19 bears the Phosphoserine mark. A Zn(2+)-binding site is contributed by Cys-55. Gly-56 contributes to the L-cysteine binding site. The 'HIGH' region signature appears at 57–67; that stretch reads PTVYDASHMGH. At Arg-79 the chain carries Phosphoserine. Residue Thr-96 coordinates L-cysteine. Residues 101–104 carry the 'KIIK' region motif; the sequence is KIIK. Phosphoserine is present on residues Ser-305 and Ser-307. Zn(2+) is bound by residues Cys-348, His-373, and Glu-377. L-cysteine is bound at residue His-373. The 'KMSKS' region motif lies at 406-410; the sequence is KMSKS. Lys-409 provides a ligand contact to ATP. Residue Lys-503 is modified to N6-acetyllysine. Basic and acidic residues predominate over residues 653–679; the sequence is EKRRVEEEKRKKKEEAARRKQEQEAAK. Positions 653–686 are disordered; it reads EKRRVEEEKRKKKEEAARRKQEQEAAKLAKMKIP. Ser-746 bears the Phosphoserine mark.

It belongs to the class-I aminoacyl-tRNA synthetase family. Homodimer. The cofactor is Zn(2+).

The protein resides in the cytoplasm. The enzyme catalyses tRNA(Cys) + L-cysteine + ATP = L-cysteinyl-tRNA(Cys) + AMP + diphosphate. Functionally, catalyzes the ATP-dependent ligation of cysteine to tRNA(Cys). The sequence is that of Cysteine--tRNA ligase, cytoplasmic from Homo sapiens (Human).